Reading from the N-terminus, the 176-residue chain is Ribosome rescue factor SmrB (176 aa).

Residues leucine 93 to aspartate 168 enclose the Smr domain.

This sequence belongs to the SmrB family. In terms of assembly, associates with collided ribosomes, but not with correctly translating polysomes.

Its function is as follows. Acts as a ribosome collision sensor. Detects stalled/collided disomes (pairs of ribosomes where the leading ribosome is stalled and a second ribosome has collided with it) and endonucleolytically cleaves mRNA at the 5' boundary of the stalled ribosome. Stalled/collided disomes form a new interface (primarily via the 30S subunits) that binds SmrB. Cleaved mRNA becomes available for tmRNA ligation, leading to ribosomal subunit dissociation and rescue of stalled ribosomes. The polypeptide is Ribosome rescue factor SmrB (Shewanella sp. (strain W3-18-1)).